A 369-amino-acid chain; its full sequence is Anhydro-N-acetylmuramic acid kinase (369 aa).

Residue 12-19 coordinates ATP; the sequence is GTSMDGVD.

The protein belongs to the anhydro-N-acetylmuramic acid kinase family.

It catalyses the reaction 1,6-anhydro-N-acetyl-beta-muramate + ATP + H2O = N-acetyl-D-muramate 6-phosphate + ADP + H(+). It functions in the pathway amino-sugar metabolism; 1,6-anhydro-N-acetylmuramate degradation. It participates in cell wall biogenesis; peptidoglycan recycling. Functionally, catalyzes the specific phosphorylation of 1,6-anhydro-N-acetylmuramic acid (anhMurNAc) with the simultaneous cleavage of the 1,6-anhydro ring, generating MurNAc-6-P. Is required for the utilization of anhMurNAc either imported from the medium or derived from its own cell wall murein, and thus plays a role in cell wall recycling. The sequence is that of Anhydro-N-acetylmuramic acid kinase from Shewanella baltica (strain OS185).